Reading from the N-terminus, the 130-residue chain is uncharacterized protein (130 aa).

The interval 41–64 (DDKDDHMDNQPKTSQTSKKVKLSE) is disordered.

This is an uncharacterized protein from Streptococcus pyogenes serotype M6 (strain ATCC BAA-946 / MGAS10394).